The following is a 522-amino-acid chain: Peptide chain release factor 3 (522 aa).

The region spanning 10–277 (ASRKTFAIIS…TFVDFAPSPS (268 aa)) is the tr-type G domain. Residues 19–26 (SHPDAGKT), 87–91 (DTPGH), and 141–144 (NKMD) each bind GTP.

The protein belongs to the TRAFAC class translation factor GTPase superfamily. Classic translation factor GTPase family. PrfC subfamily.

The protein resides in the cytoplasm. Increases the formation of ribosomal termination complexes and stimulates activities of RF-1 and RF-2. It binds guanine nucleotides and has strong preference for UGA stop codons. It may interact directly with the ribosome. The stimulation of RF-1 and RF-2 is significantly reduced by GTP and GDP, but not by GMP. This Listeria innocua serovar 6a (strain ATCC BAA-680 / CLIP 11262) protein is Peptide chain release factor 3.